We begin with the raw amino-acid sequence, 117 residues long: Large ribosomal subunit protein uL18 (117 aa).

Belongs to the universal ribosomal protein uL18 family. As to quaternary structure, part of the 50S ribosomal subunit; part of the 5S rRNA/L5/L18/L25 subcomplex. Contacts the 5S and 23S rRNAs.

In terms of biological role, this is one of the proteins that bind and probably mediate the attachment of the 5S RNA into the large ribosomal subunit, where it forms part of the central protuberance. In Blochmanniella pennsylvanica (strain BPEN), this protein is Large ribosomal subunit protein uL18.